The sequence spans 654 residues: MAPAIGIDLGTTYSCVGIFRDDRIEIIANDQGNRTTPSFVAFTDTERLIGDAAKNQVAMNPSNTVFDAKRLIGRKFADPEVQSDMKHFPFKVIDKAGKPVISVEFKGEEKQFTPEEISSMVLTKMRETAESYLGGTVNNAVVTVPAYFNDSQRQATKDAGLIAGLNVLRIINEPTAAAIAYGLDKKAEGERNVLIFDLGGGTFDVSLLTIEEGIFEVKSTAGDTHLGGEDFDNRLVNHFVNEFKRKHKKDLSSNARALRRLRTACERAKRTLSSAAQTSIEIDSLYEGIDFYTSITRARFEELCQDLFRSTMDPVERVLRDAKIDKSSVHEIVLVGGSTRIPRIQKLVSDFFNGKEPNKSINPDEAVAYGAAVQAAILSGDTTSKSTNEILLLDVAPLSVGIETAGGVMTPLIKRNTTIPTKKSETFSTFADNQPGVLIQVFEGERARTKDNNLLGKFELTGIPPAPRGVPQIEVTFDVDANGIMNVSALEKGTGKTNKIVITNDKGRLSKEEIERMLAEAEKYKAEDEAEASRISAKNGLESYAYSLRNTISDSKVDEKLDASDKEKLKTEIDKTVSWLDENQTATKEEFEAQQKELESVANPIMMKFYGAGGEGGAPGAGFPGAGGPGGFPGAGAGGAHSGGDDGPTVEEVD.

The segment covering 612–646 (AGGEGGAPGAGFPGAGGPGGFPGAGAGGAHSGGDD) has biased composition (gly residues). Residues 612 to 654 (AGGEGGAPGAGFPGAGGPGGFPGAGAGGAHSGGDDGPTVEEVD) form a disordered region.

This sequence belongs to the heat shock protein 70 family.

This chain is Heat shock 70 kDa protein 2 (HSP70-2), found in Paracoccidioides lutzii (strain ATCC MYA-826 / Pb01) (Paracoccidioides brasiliensis).